We begin with the raw amino-acid sequence, 214 residues long: A-type ATP synthase subunit D (214 aa).

Belongs to the V-ATPase D subunit family. As to quaternary structure, has multiple subunits with at least A(3), B(3), C, D, E, F, H, I and proteolipid K(x).

It localises to the cell membrane. Functionally, component of the A-type ATP synthase that produces ATP from ADP in the presence of a proton gradient across the membrane. In Pyrococcus abyssi (strain GE5 / Orsay), this protein is A-type ATP synthase subunit D.